The sequence spans 323 residues: Aspartate carbamoyltransferase catalytic subunit (323 aa).

Positions 71 and 72 each coordinate carbamoyl phosphate. Lys-99 is a binding site for L-aspartate. Carbamoyl phosphate is bound by residues Arg-121, His-151, and Gln-154. Positions 184 and 239 each coordinate L-aspartate. The carbamoyl phosphate site is built by Gly-280 and Pro-281.

The protein belongs to the aspartate/ornithine carbamoyltransferase superfamily. ATCase family. In terms of assembly, heterododecamer (2C3:3R2) of six catalytic PyrB chains organized as two trimers (C3), and six regulatory PyrI chains organized as three dimers (R2).

It carries out the reaction carbamoyl phosphate + L-aspartate = N-carbamoyl-L-aspartate + phosphate + H(+). Its pathway is pyrimidine metabolism; UMP biosynthesis via de novo pathway; (S)-dihydroorotate from bicarbonate: step 2/3. Functionally, catalyzes the condensation of carbamoyl phosphate and aspartate to form carbamoyl aspartate and inorganic phosphate, the committed step in the de novo pyrimidine nucleotide biosynthesis pathway. This Cupriavidus metallidurans (strain ATCC 43123 / DSM 2839 / NBRC 102507 / CH34) (Ralstonia metallidurans) protein is Aspartate carbamoyltransferase catalytic subunit.